Consider the following 198-residue polypeptide: Succinate dehydrogenase [ubiquinone] cytochrome b subunit, mitochondrial (198 aa).

Residues 1–50 (MSAMMVKLGLNKSALLLKPSAFSRAAALSSSRRLLFNTARTNFLSTSPLK) constitute a mitochondrion transit peptide. Residues 51–99 (NVASEMNTKAAIAEEQILNKQRAKRPISPHLTIYQPQLTWYLSSLHRIS) are Mitochondrial matrix-facing. Residues Ser-93 and Arg-97 each contribute to the a ubiquinone site. A helical membrane pass occupies residues 100-120 (LVLMGLGFYLFTILFGVSGLL). The Mitochondrial intermembrane segment spans residues 121-139 (GLGLTTEKVSNWYHQKFSK). A helical transmembrane segment spans residues 140–160 (ITEWSIKGSFAYLFAIHYGGA). His-156 lines the heme pocket. The Mitochondrial matrix segment spans residues 161-175 (IRHLIWDTAKELTLK). Residues 176–196 (GVYRTGYALIGFTAVLGTYLL) form a helical membrane-spanning segment. Over 197-198 (TL) the chain is Mitochondrial intermembrane.

The protein belongs to the cytochrome b560 family. Forms part of complex II containing four subunits: a flavoprotein (FP), an iron-sulfur protein (IP) and a cytochrome b composed of two integral membrane proteins. Heme is required as a cofactor.

The protein resides in the mitochondrion inner membrane. Its pathway is carbohydrate metabolism; tricarboxylic acid cycle. Membrane-anchoring mono-heme cytochrome b subunit of succinate dehydrogenase (SDH) that is involved in system II of the mitochondrial electron transport chain and is responsible for transferring electrons from succinate to ubiquinone (coenzyme Q). SDH3 and SDH4 form the membrane dimer that anchors the catalytic dimer formed by SDH1 and SDH2 to the matrix surface of the mitochondrial inner membrane. Electrons originating from the catalytic dimer enter the membrane dimer for ubiquinone reduction. The sequence is that of Succinate dehydrogenase [ubiquinone] cytochrome b subunit, mitochondrial (SDH3) from Saccharomyces cerevisiae (strain ATCC 204508 / S288c) (Baker's yeast).